Here is a 293-residue protein sequence, read N- to C-terminus: Formamidopyrimidine-DNA glycosylase (293 aa).

The Schiff-base intermediate with DNA role is filled by Pro-2. Residue Glu-3 is the Proton donor of the active site. Lys-61 functions as the Proton donor; for beta-elimination activity in the catalytic mechanism. Residues His-104, Arg-123, and Lys-169 each coordinate DNA. The FPG-type zinc finger occupies 255–289 (DAYGREGEPCRRCGAIMRRDKFMNRSSFYCPRCQP). Arg-279 serves as the catalytic Proton donor; for delta-elimination activity.

The protein belongs to the FPG family. In terms of assembly, monomer. It depends on Zn(2+) as a cofactor.

It carries out the reaction Hydrolysis of DNA containing ring-opened 7-methylguanine residues, releasing 2,6-diamino-4-hydroxy-5-(N-methyl)formamidopyrimidine.. It catalyses the reaction 2'-deoxyribonucleotide-(2'-deoxyribose 5'-phosphate)-2'-deoxyribonucleotide-DNA = a 3'-end 2'-deoxyribonucleotide-(2,3-dehydro-2,3-deoxyribose 5'-phosphate)-DNA + a 5'-end 5'-phospho-2'-deoxyribonucleoside-DNA + H(+). Its function is as follows. Involved in base excision repair of DNA damaged by oxidation or by mutagenic agents. Acts as a DNA glycosylase that recognizes and removes damaged bases. Has a preference for oxidized purines, such as 7,8-dihydro-8-oxoguanine (8-oxoG). Has AP (apurinic/apyrimidinic) lyase activity and introduces nicks in the DNA strand. Cleaves the DNA backbone by beta-delta elimination to generate a single-strand break at the site of the removed base with both 3'- and 5'-phosphates. This is Formamidopyrimidine-DNA glycosylase from Mycolicibacterium vanbaalenii (strain DSM 7251 / JCM 13017 / BCRC 16820 / KCTC 9966 / NRRL B-24157 / PYR-1) (Mycobacterium vanbaalenii).